The chain runs to 321 residues: Electron transfer flavoprotein subunit alpha (321 aa).

Residues Arg-211, Ser-236, Arg-237, Gln-250, Val-251, Ser-254, Gly-255, Ser-270, Ser-272, Gln-274, His-275, Asn-289, Asp-307, and Ile-308 each coordinate FAD.

Heterodimer of an alpha and a beta subunit. Forms a ternary complex with trimethylamine dehydrogenase. FAD serves as cofactor.

Its function is as follows. Heterodimeric electron transfer flavoprotein that accepts electrons from trimethylamine dehydrogenase. It transfers the electrons to the main respiratory chain via ETF-ubiquinone oxidoreductase (ETF dehydrogenase). In Methylophilus methylotrophus (Bacterium W3A1), this protein is Electron transfer flavoprotein subunit alpha (etfA).